We begin with the raw amino-acid sequence, 345 residues long: NADPH dehydrogenase (345 aa).

FMN is bound at residue 23–26 (SPMC). Tyr28 contacts substrate. Ala60 and Gln102 together coordinate FMN. Residue 164–167 (HGAH) participates in substrate binding. Residues Arg215 and 307–308 (GR) contribute to the FMN site.

This sequence belongs to the NADH:flavin oxidoreductase/NADH oxidase family. NamA subfamily. As to quaternary structure, homotetramer. It depends on FMN as a cofactor.

The enzyme catalyses A + NADPH + H(+) = AH2 + NADP(+). Functionally, catalyzes the reduction of the double bond of an array of alpha,beta-unsaturated aldehydes and ketones. It also reduces the nitro group of nitroester and nitroaromatic compounds. It could have a role in detoxification processes. This is NADPH dehydrogenase from Bacillus anthracis (strain CDC 684 / NRRL 3495).